The primary structure comprises 111 residues: uncharacterized protein (111 aa).

Helical transmembrane passes span 29–49 (LLNF…ATAV) and 52–72 (ACFA…YLLA).

Its subcellular location is the membrane. This is an uncharacterized protein from Saccharomyces cerevisiae (strain ATCC 204508 / S288c) (Baker's yeast).